The sequence spans 128 residues: Glyoxylase-like domain-containing protein (128 aa).

Residues 6-125 (QISGIEIPAT…EGNTHAICTR (120 aa)) form the VOC domain.

The protein operates within mycotoxin biosynthesis. Functionally, glyoxylase-like domain-containing protein; part of the gene cluster that mediates the biosynthesis of the selective antifungal agent ascochitine, an o-quinone methide that plays a possible protective role against other microbial competitors in nature and is considered to be important for pathogenicity of legume-associated Didymella species. The pathway probably begins with the synthesis of a keto-aldehyde intermediate by the ascochitine non-reducing polyketide synthase pksAC from successive condensations of 4 malonyl-CoA units, presumably with a simple acetyl-CoA starter unit. Release of the keto-aldehyde intermediate is consistent with the presence of the C-terminal reductive release domain. The HR-PKS (orf7) probably makes a diketide starter unit which is passed to the non-reducing polyketide synthase pksAC for further extension, producing ascochital and ascochitine. The aldehyde dehydrogenase (orf1), the 2-oxoglutarate-dependent dioxygenase (orf3) and the dehydrogenase (orf9) are probably involved in subsequent oxidations of methyl groups to the carboxylic acid of the heterocyclic ring. The ascochitine gene cluster also includes a gene encoding a short peptide with a cupin domain (orf2) that is often found in secondary metabolite gene clusters and which function has still to be determined. The sequence is that of Glyoxylase-like domain-containing protein from Didymella fabae (Leaf and pod spot disease fungus).